The chain runs to 259 residues: MASGREEFVYMAKLAEQAERYEEMVEFMEKVSAAVDGDELTVEERNLLSVAYKNVIGARRASWRIISSIEQKEESRGNDDHVTAIREYRSKIETELSGICDGILKLLDSRLIPAAASGDSKVFYLKMKGDYHRYLAEFKTGQERKDAAEHTLAAYKSAQDIANAELAPTHPIRLGLALNFSVFYYEILNSPDRACNLAKQAFDEAIAELDTLGEESYKDSTLIMQLLRDNLTLWTSDMQDDAADEIKEAAAPKPTEEQQ.

Serine 67, serine 109, and serine 190 each carry phosphoserine. At threonine 211 the chain carries Phosphothreonine.

Belongs to the 14-3-3 family. Interacts with CINV1.

Its subcellular location is the nucleus. The protein resides in the cytoplasm. In terms of biological role, is associated with a DNA binding complex that binds to the G box, a well-characterized cis-acting DNA regulatory element found in plant genes. This Arabidopsis thaliana (Mouse-ear cress) protein is 14-3-3-like protein GF14 omega (GRF2).